The primary structure comprises 198 residues: Ribonuclease HII (198 aa).

Residues 9 to 198 (ITVAGADEAG…LLPDQLKIDF (190 aa)) enclose the RNase H type-2 domain. A divalent metal cation is bound by residues aspartate 15, glutamate 16, and aspartate 107.

This sequence belongs to the RNase HII family. Requires Mn(2+) as cofactor. It depends on Mg(2+) as a cofactor.

The protein resides in the cytoplasm. The enzyme catalyses Endonucleolytic cleavage to 5'-phosphomonoester.. Functionally, endonuclease that specifically degrades the RNA of RNA-DNA hybrids. This Christiangramia forsetii (strain DSM 17595 / CGMCC 1.15422 / KT0803) (Gramella forsetii) protein is Ribonuclease HII.